The sequence spans 42 residues: Photosystem I reaction center subunit IX (42 aa).

Residues 7-27 (FLSTAPVLIMALLTVTAGILI) traverse the membrane as a helical segment.

It belongs to the PsaJ family.

The protein localises to the cellular thylakoid membrane. Functionally, may help in the organization of the PsaE and PsaF subunits. The protein is Photosystem I reaction center subunit IX of Crocosphaera subtropica (strain ATCC 51142 / BH68) (Cyanothece sp. (strain ATCC 51142)).